Reading from the N-terminus, the 639-residue chain is Alpha-dioxygenase 1 (639 aa).

His163 functions as the Proton acceptor in the catalytic mechanism. Ca(2+) is bound at residue Asp164. His168 is a binding site for heme b. 4 residues coordinate Ca(2+): Thr216, Trp218, Asp220, and Ser222. 3 residues coordinate heme b: His389, Arg486, and Arg490.

It belongs to the peroxidase family. As to quaternary structure, forms monomers in solution. The cofactor is heme b. Ca(2+) is required as a cofactor. In terms of tissue distribution, expressed in roots (epiderm), mature flowers (e.g. anthers) and senescing leaves.

The protein resides in the lipid droplet. It carries out the reaction a 1,2-saturated fatty acid + O2 = a (2R)-2-hydroperoxy fatty acid. It catalyses the reaction (9Z,12Z,15Z)-octadecatrienoate + O2 = (R)-2-hydroperoxy-(9Z,12Z,15Z)-octadecatrienoate. The catalysed reaction is hexadecanoate + O2 = (2R)-2-hydroperoxyhexadecanoate. The enzyme catalyses (9Z,12Z)-octadecadienoate + O2 = (2R,9Z,12Z)-2-hydroperoxyoctadecadienoate. It carries out the reaction (9Z)-octadecenoate + O2 = (2R,9Z)-2-hydroperoxyoctadecenoate. Alpha-dioxygenase that catalyzes the primary oxygenation step of a variety of 14-20 carbon fatty acids, containing up to three unsaturated bonds, into their corresponding 2R-hydroperoxides. Involved in the production of oxylipins that function in cell signaling, wound healing, and protection from infection. Mediates protection against oxidative stress and cell death, probably by generating some lipid-derived molecules. Promotes local and systemic plant defense in a salicylic acid (SA)-dependent manner, including the establishment of systemic acquired resistance (SAR) in response to incompatible interaction. Involved in a negative regulation of abscisic acid (ABA)-mediated signaling pathway. In Arabidopsis thaliana (Mouse-ear cress), this protein is Alpha-dioxygenase 1.